The primary structure comprises 1293 residues: Phosphoribosylformylglycinamidine synthase (1293 aa).

Residues 308–319 and A675 each bind ATP; that span reads GAATGAGGEIRD. Residues D676, E715, N719, and D883 each coordinate Mg(2+). An ATP-binding site is contributed by S885. Residues 1040–1293 enclose the Glutamine amidotransferase type-1 domain; sequence MAILREQGVN…MFRNARKFIG (254 aa). C1133 functions as the Nucleophile in the catalytic mechanism. Active-site residues include H1258 and E1260.

In the N-terminal section; belongs to the FGAMS family. Monomer.

The protein resides in the cytoplasm. It carries out the reaction N(2)-formyl-N(1)-(5-phospho-beta-D-ribosyl)glycinamide + L-glutamine + ATP + H2O = 2-formamido-N(1)-(5-O-phospho-beta-D-ribosyl)acetamidine + L-glutamate + ADP + phosphate + H(+). It functions in the pathway purine metabolism; IMP biosynthesis via de novo pathway; 5-amino-1-(5-phospho-D-ribosyl)imidazole from N(2)-formyl-N(1)-(5-phospho-D-ribosyl)glycinamide: step 1/2. Functionally, phosphoribosylformylglycinamidine synthase involved in the purines biosynthetic pathway. Catalyzes the ATP-dependent conversion of formylglycinamide ribonucleotide (FGAR) and glutamine to yield formylglycinamidine ribonucleotide (FGAM) and glutamate. The chain is Phosphoribosylformylglycinamidine synthase from Methylobacillus flagellatus (strain ATCC 51484 / DSM 6875 / VKM B-1610 / KT).